Consider the following 1076-residue polypeptide: Histone deacetylase 4 (1076 aa).

A coiled-coil region spans residues Arg66 to Glu169. The interaction with MEF2A stretch occupies residues Met117–Glu312. Basic and acidic residues predominate over residues Lys132–Glu162. Disordered regions lie at residues Lys132–Ala166, Thr205–Asn225, and Pro239–Pro323. The span at Thr205–Tyr224 shows a compositional bias: polar residues. Position 209 is a phosphoserine (Ser209). Ser245 carries the post-translational modification Phosphoserine; by CaMK4 and SIK1. Positions Lys258 to Gly273 are enriched in basic and acidic residues. A compositionally biased stretch (low complexity) spans Ser289–Ser310. The short motif at Pro348 to Ile353 is the PxLPxI/L motif; mediates interaction with ANKRA2 and 14-3-3 proteins element. Phosphoserine is present on Ser349. At Ser465 the chain carries Phosphoserine; by CaMK4 and SIK1. 3 disordered regions span residues Ile506–Glu529, Arg541–Ala580, and Arg622–Thr645. The span at Arg514–Glu529 shows a compositional bias: basic and acidic residues. A Glycyl lysine isopeptide (Lys-Gly) (interchain with G-Cter in SUMO) cross-link involves residue Lys556. Ser562 carries the phosphoserine modification. A compositionally biased stretch (polar residues) spans Arg626–Met638. Residue Ser629 is modified to Phosphoserine; by CaMK4. Ser630 is modified (phosphoserine). The tract at residues Gly652–Leu1076 is histone deacetylase. Zn(2+) contacts are provided by Cys664, Cys666, His672, and Cys743. Residue His795 is part of the active site. The Nuclear export signal motif lies at Glu1043–Leu1076.

The protein belongs to the histone deacetylase family. HD type 2 subfamily. As to quaternary structure, homodimer. Homodimerization via its N-terminal domain. Interacts with HDAC7. Interacts with MEF2A, MEF2C, MEF2D, MORC2 and NR2C1. Interacts with a 14-3-3 chaperone proteins in a phosphorylation dependent manner. Interacts with 14-3-3 protein YWHAB. Interacts with BTBD14B. Interacts with KDM5B. Interacts (via PxLPxI/L motif) with ANKRA2 (via ankyrin repeats). Interacts with CUL7 (as part of the 3M complex); negatively regulated by ANKRA2. Interacts with EP300 in the presence of TFAP2C. Interacts with AHRR. Interacts with MYOCD. Interacts with HSPA1A and HSPA1B leading to their deacetylation at 'Lys-77'. Interacts with ZBTB7B; the interaction allows the recruitment of HDAC4 on CD8 loci for deacetylation and possible inhibition of CD8 genes expression. Interacts with DHX36. Interacts with SIK3; this interaction leads to HDAC4 retention in the cytoplasm. Interacts with ZNF638. Phosphorylated by CaMK4 at Ser-245, Ser-465 and Ser-629. Phosphorylation at other residues by CaMK2D is required for the interaction with 14-3-3. Phosphorylation at Ser-349, within the PxLPxI/L motif, impairs the binding of ANKRA2 but generates a high-affinity docking site for 14-3-3. In terms of processing, sumoylation on Lys-556 is promoted by the E3 SUMO-protein ligase RANBP2, and prevented by phosphorylation by CaMK4.

The protein resides in the nucleus. It localises to the cytoplasm. It carries out the reaction N(6)-acetyl-L-lysyl-[histone] + H2O = L-lysyl-[histone] + acetate. In terms of biological role, responsible for the deacetylation of lysine residues on the N-terminal part of the core histones (H2A, H2B, H3 and H4). Histone deacetylation gives a tag for epigenetic repression and plays an important role in transcriptional regulation, cell cycle progression and developmental events. Histone deacetylases act via the formation of large multiprotein complexes. Involved in muscle maturation via its interaction with the myocyte enhancer factors such as MEF2A, MEF2C and MEF2D. Deacetylates HSPA1A and HSPA1A at 'Lys-77' leading to their preferential binding to co-chaperone STUB1. The sequence is that of Histone deacetylase 4 (Hdac4) from Mus musculus (Mouse).